A 512-amino-acid chain; its full sequence is GMP synthase [glutamine-hydrolyzing] (512 aa).

The Glutamine amidotransferase type-1 domain occupies 7 to 197; it reads TILILDFGGQ…LFEVCDCSAD (191 aa). Catalysis depends on Cys84, which acts as the Nucleophile. Catalysis depends on residues His171 and Glu173. Residues 198–387 form the GMPS ATP-PPase domain; it reads WTMDSLIEQT…LGIPDEILYR (190 aa). Position 225-231 (225-231) interacts with ATP; the sequence is SGGVDSA.

Homodimer.

The catalysed reaction is XMP + L-glutamine + ATP + H2O = GMP + L-glutamate + AMP + diphosphate + 2 H(+). Its pathway is purine metabolism; GMP biosynthesis; GMP from XMP (L-Gln route): step 1/1. Catalyzes the synthesis of GMP from XMP. The polypeptide is GMP synthase [glutamine-hydrolyzing] (Caldanaerobacter subterraneus subsp. tengcongensis (strain DSM 15242 / JCM 11007 / NBRC 100824 / MB4) (Thermoanaerobacter tengcongensis)).